Here is a 51-residue protein sequence, read N- to C-terminus: UPF0320 protein YOL166W-A (51 aa).

Belongs to the UPF0320 family.

This Saccharomyces cerevisiae (strain ATCC 204508 / S288c) (Baker's yeast) protein is UPF0320 protein YOL166W-A.